The sequence spans 223 residues: Endonuclease V (223 aa).

Asp35 and Asp103 together coordinate Mg(2+).

It belongs to the endonuclease V family. Mg(2+) is required as a cofactor.

It localises to the cytoplasm. The catalysed reaction is Endonucleolytic cleavage at apurinic or apyrimidinic sites to products with a 5'-phosphate.. Functionally, DNA repair enzyme involved in the repair of deaminated bases. Selectively cleaves double-stranded DNA at the second phosphodiester bond 3' to a deoxyinosine leaving behind the intact lesion on the nicked DNA. The protein is Endonuclease V of Escherichia coli O139:H28 (strain E24377A / ETEC).